The primary structure comprises 428 residues: Gamma-glutamyl phosphate reductase (428 aa).

Belongs to the gamma-glutamyl phosphate reductase family.

It is found in the cytoplasm. It catalyses the reaction L-glutamate 5-semialdehyde + phosphate + NADP(+) = L-glutamyl 5-phosphate + NADPH + H(+). The protein operates within amino-acid biosynthesis; L-proline biosynthesis; L-glutamate 5-semialdehyde from L-glutamate: step 2/2. Its function is as follows. Catalyzes the NADPH-dependent reduction of L-glutamate 5-phosphate into L-glutamate 5-semialdehyde and phosphate. The product spontaneously undergoes cyclization to form 1-pyrroline-5-carboxylate. This chain is Gamma-glutamyl phosphate reductase, found in Zymomonas mobilis subsp. mobilis (strain ATCC 31821 / ZM4 / CP4).